A 390-amino-acid chain; its full sequence is Sulfate adenylyltransferase (390 aa).

The protein belongs to the sulfate adenylyltransferase family.

It carries out the reaction sulfate + ATP + H(+) = adenosine 5'-phosphosulfate + diphosphate. Its pathway is sulfur metabolism; hydrogen sulfide biosynthesis; sulfite from sulfate: step 1/3. This Synechocystis sp. (strain ATCC 27184 / PCC 6803 / Kazusa) protein is Sulfate adenylyltransferase (sat).